The following is an 805-amino-acid chain: FAD-dependent monooxygenase verC1 (805 aa).

Positions 1–20 (MTFRVIIVGGGVAGLTLASA) are cleaved as a signal peptide. FAD contacts are provided by E32, A46, and R107. N132 is a glycosylation site (N-linked (GlcNAc...) asparagine). Y214 is a catalytic residue. 2 residues coordinate FAD: D306 and A319. 7 consecutive transmembrane segments (helical) span residues 551–571 (ALTMAQIPTLFTFYGQMAGLG), 604–624 (IAVLPAIIVSYYIPLSAAFFW), 632–652 (SWLFVWQMHPIWTAITLYLFS), 671–691 (LPVIKFSMTVLVIGAAGFWMW), 703–723 (VFFPTAVPSTQAPFAACVCAI), 726–746 (WDMLSTFGSTFLWLGYLIWDL), and 761–781 (IYGVAAFVALGPGAAIGLGWL).

It belongs to the paxM FAD-dependent monooxygenase family.

The protein resides in the membrane. The protein operates within secondary metabolite biosynthesis; terpenoid biosynthesis. It participates in mycotoxin biosynthesis. Functionally, FAD-dependent monooxygenase; part of the gene cluster that mediates the biosynthesis of the neurotoxin verrucosidin, a methylated alpha-pyrone polyketide that inhibits oxidative phosphorylation in mitochondria and thereby causes neurological diseases. The carbon backbone of verrucosidin is synthesized by the HR-PKS verA, and further modified by the other verrucodidin cluster enzymes. The sequence is that of FAD-dependent monooxygenase verC1 from Penicillium polonicum.